A 223-amino-acid chain; its full sequence is Cytotoxic T-lymphocyte protein 4 (223 aa).

Residues 1 to 35 (MAGFGFRRHGVQPDLASRTWPCTALFSLLFIPVFS) form the signal peptide. At 36–161 (KGMHAAQPAV…IDPEPCPDSD (126 aa)) the chain is on the extracellular side. The Ig-like V-type domain maps to 39–140 (HAAQPAVVLA…VELMYPPPYY (102 aa)). Residues 46-50 (VLASS) are homodimerization. Disulfide bonds link cysteine 58–cysteine 129 and cysteine 85–cysteine 103. An N-linked (GlcNAc...) asparagine glycan is attached at asparagine 113. The tract at residues 134–139 (MYPPPY) is important for interaction with CD80 and CD86. Asparagine 145 carries an N-linked (GlcNAc...) asparagine glycan. The segment at 150-155 (YVIDPE) is homodimerization. The helical transmembrane segment at 162–182 (FLLWILAAVSSGLFFYSFLIT) threads the bilayer. Residues 183-223 (AVSLSKMLKKRSPLTTGVYVKMPPTGPECEKQFQPYFIPIN) lie on the Cytoplasmic side of the membrane. Position 201 is a phosphotyrosine; by TXK and JAK2 (tyrosine 201).

As to quaternary structure, homodimer; disulfide-linked. Binds to CD80/B7-1 and CD86/B7.2. Interacts with ICOSLG. In terms of processing, N-glycosylation is important for dimerization. Post-translationally, phosphorylation at Tyr-201 prevents binding to the AP-2 adapter complex, blocks endocytosis, and leads to retention of CTLA4 on the cell surface.

The protein resides in the cell membrane. In terms of biological role, inhibitory receptor acting as a major negative regulator of T-cell responses. The affinity of CTLA4 for its natural B7 family ligands, CD80 and CD86, is considerably stronger than the affinity of their cognate stimulatory coreceptor CD28. The protein is Cytotoxic T-lymphocyte protein 4 (CTLA4) of Canis lupus familiaris (Dog).